The primary structure comprises 217 residues: MEKLLLGVLLLAFLPEGMTQKDLRGKVFIFPEQSDTAYVTLIPRVRKPLRSFTLCLKAFTDLTRPYSLFSYSTKSKDNELLLFVNKVGEYELHIGNTKVTFKVPRPPYGPVHLCVSWESVSGIAELWMNSRPVGRKGLRRGYTLGQDARIILGQEQDSFGGKFDAKQSFVGEIWDVSLWDHVVSLKNLCFTCYTSNILNWKALIYQAKGYVVVKPKL.

An N-terminal signal peptide occupies residues 1–19 (MEKLLLGVLLLAFLPEGMT). The Pentraxin (PTX) domain occupies 24 to 217 (RGKVFIFPEQ…KGYVVVKPKL (194 aa)). Residues C55 and C114 are joined by a disulfide bond. 6 residues coordinate Ca(2+): D77, N78, E155, Q156, D157, and Q167.

It belongs to the pentraxin family. Homopentamer. Pentraxin (or pentaxin) have a discoid arrangement of 5 non-covalently bound subunits. Ca(2+) serves as cofactor.

Its subcellular location is the secreted. The chain is Mucosal pentraxin (MPTX) from Bos taurus (Bovine).